A 621-amino-acid polypeptide reads, in one-letter code: Pentatricopeptide repeat-containing protein At3g48250, chloroplastic (621 aa).

The transit peptide at 1-67 directs the protein to the chloroplast; sequence MYRSMAILSS…SKPDSMLQLV (67 aa). 10 PPR repeats span residues 122-156, 157-194, 262-296, 297-331, 332-368, 369-403, 404-438, 439-473, 474-509, and 510-544; these read STPL…GFYL, DEDT…NAMS, STVT…GYDM, DLDT…PFKP, SIQD…GKSL, SKAV…GYEP, DNIT…GCFP, DIKT…GFDI, DSNL…NVKP, and WQST…NYPA.

Belongs to the PPR family. P subfamily.

The protein localises to the plastid. Its subcellular location is the chloroplast. The chain is Pentatricopeptide repeat-containing protein At3g48250, chloroplastic from Arabidopsis thaliana (Mouse-ear cress).